A 242-amino-acid polypeptide reads, in one-letter code: Neuromodulin (242 aa).

A disordered region spans residues 1-242 (MLCCMRRTKQ…EEREADQEHA (242 aa)). Residues Cys3 and Cys4 are each lipidated (S-palmitoyl cysteine). Residues 9–32 (KQVEKNDEDQKIEQDGIKPEDKAH) show a composition bias toward basic and acidic residues. Residues 31–60 (AHKAATKIQASFRGHITRKKLKGEKKGDAP) enclose the IQ domain. Position 41 is a phosphoserine; by PHK and PKC (Ser41). Positions 66–84 (ANEKDEAAVAEGTEKKEGE) are enriched in basic and acidic residues. Residues 85-97 (GSTPAEAAPGAGP) show a composition bias toward low complexity. Ser86 carries the post-translational modification Phosphoserine. Basic and acidic residues predominate over residues 98 to 118 (KPEEKTGKAGETPSEEKKGEG). Positions 119 to 134 (APDAATEQAAPQAPAP) are enriched in low complexity. Residues 143–158 (ETESATKASTDNSPSS) are compositionally biased toward polar residues. Phosphoserine is present on residues Ser155, Ser157, and Ser158. The span at 159 to 171 (KAEDAPAKEEPKQ) shows a compositional bias: basic and acidic residues. Residues 172–204 (ADVPAAVTAAAATAPAAEDAAAMATAQPPTETA) are compositionally biased toward low complexity. Ser206 and Ser207 each carry phosphoserine; by CK2. The segment covering 209 to 242 (AEEKIEAVDETKPKDSARQDEGKGEEREADQEHA) has biased composition (basic and acidic residues).

The protein belongs to the neuromodulin family. In terms of assembly, identified in a complex containing FGFR4, NCAM1, CDH2, PLCG1, FRS2, SRC, SHC1, GAP43 and CTTN. Interacts (via IQ domain) with calmodulin. Binds calmodulin with a greater affinity in the absence of Ca(2+) than in its presence. Phosphorylated. Phosphorylation of this protein by a protein kinase C is specifically correlated with certain forms of synaptic plasticity. Post-translationally, palmitoylated by ZDHHC3. Palmitoylation is regulated by ARF6 and is essential for plasma membrane association and axonal and dendritic filopodia induction. Deacylated by LYPLA2.

Its subcellular location is the cell membrane. It localises to the cell projection. The protein resides in the growth cone membrane. The protein localises to the synapse. It is found in the filopodium membrane. Its subcellular location is the perikaryon. It localises to the dendrite. The protein resides in the axon. The protein localises to the cytoplasm. In terms of biological role, this protein is associated with nerve growth. It is a major component of the motile 'growth cones' that form the tips of elongating axons. Plays a role in axonal and dendritic filopodia induction. The sequence is that of Neuromodulin (GAP43) from Bos taurus (Bovine).